Here is a 420-residue protein sequence, read N- to C-terminus: MSNINKILDPNSRMVSGPLNVVRLEGNFYGIKKVLYLFMDYHADVSDQTQCENIFSEDVQKYFAKTFYKLNDSNKIYDFFLEVFPTEIAQDIYSDDVPEIDHKEMYIEEVVKLFKKLFRYDPKKNRVLMNNITKNIRLHYIDIRDYYKNNVHNRTADMNIIARNFMVKGNIKVSQLNKIIKLMKIIRNHLEEIVEILEYSPKNNKSQRSKIIKTRDYDDLDIQTIEYLARKIKSTYKYQDVKKIMNMLLQQSIDNFKSTIKNIDESIKIFTNYAKQISESTDKLVRDPNTSYVYVYGLSPYTIRNMIVDIANRVDKIMDEQLIEFFARFTDIFFLRRFLDKDYITNGIIYTGALHSNTYINVLVKYFDFKVTHFSYSKISNPQLLTSEIKKRSLMEIQELILPNSFGQCSDMNSFPKEFQ.

The protein belongs to the mimivirus R160 family.

It is found in the virion. This is an uncharacterized protein from Acanthamoeba polyphaga mimivirus (APMV).